The following is a 190-amino-acid chain: Adenine phosphoribosyltransferase (190 aa).

It belongs to the purine/pyrimidine phosphoribosyltransferase family. In terms of assembly, homodimer.

The protein localises to the cytoplasm. It carries out the reaction AMP + diphosphate = 5-phospho-alpha-D-ribose 1-diphosphate + adenine. It functions in the pathway purine metabolism; AMP biosynthesis via salvage pathway; AMP from adenine: step 1/1. Functionally, catalyzes a salvage reaction resulting in the formation of AMP, that is energically less costly than de novo synthesis. In Cupriavidus taiwanensis (strain DSM 17343 / BCRC 17206 / CCUG 44338 / CIP 107171 / LMG 19424 / R1) (Ralstonia taiwanensis (strain LMG 19424)), this protein is Adenine phosphoribosyltransferase.